A 372-amino-acid polypeptide reads, in one-letter code: Bifunctional enzyme IspD/IspF (372 aa).

The segment at 1 to 211 (MLDISLIMLG…SALKAPENEL (211 aa)) is 2-C-methyl-D-erythritol 4-phosphate cytidylyltransferase. A 2-C-methyl-D-erythritol 2,4-cyclodiphosphate synthase region spans residues 212 to 372 (FVGSGFDVHE…SLKFYNWTQI (161 aa)). The a divalent metal cation site is built by D218 and H220. 4-CDP-2-C-methyl-D-erythritol 2-phosphate contacts are provided by residues 218–220 (DVH) and 244–245 (HS). A divalent metal cation is bound at residue H252. 4-CDP-2-C-methyl-D-erythritol 2-phosphate-binding positions include 266-268 (DIG), 271-275 (FPDTD), 342-345 (TTTE), F349, and R352.

This sequence in the N-terminal section; belongs to the IspD/TarI cytidylyltransferase family. IspD subfamily. In the C-terminal section; belongs to the IspF family. The cofactor is a divalent metal cation.

It carries out the reaction 2-C-methyl-D-erythritol 4-phosphate + CTP + H(+) = 4-CDP-2-C-methyl-D-erythritol + diphosphate. The enzyme catalyses 4-CDP-2-C-methyl-D-erythritol 2-phosphate = 2-C-methyl-D-erythritol 2,4-cyclic diphosphate + CMP. It participates in isoprenoid biosynthesis; isopentenyl diphosphate biosynthesis via DXP pathway; isopentenyl diphosphate from 1-deoxy-D-xylulose 5-phosphate: step 2/6. The protein operates within isoprenoid biosynthesis; isopentenyl diphosphate biosynthesis via DXP pathway; isopentenyl diphosphate from 1-deoxy-D-xylulose 5-phosphate: step 4/6. Its function is as follows. Bifunctional enzyme that catalyzes the formation of 4-diphosphocytidyl-2-C-methyl-D-erythritol from CTP and 2-C-methyl-D-erythritol 4-phosphate (MEP) (IspD), and catalyzes the conversion of 4-diphosphocytidyl-2-C-methyl-D-erythritol 2-phosphate (CDP-ME2P) to 2-C-methyl-D-erythritol 2,4-cyclodiphosphate (ME-CPP) with a corresponding release of cytidine 5-monophosphate (CMP) (IspF). The sequence is that of Bifunctional enzyme IspD/IspF from Campylobacter concisus (strain 13826).